Consider the following 81-residue polypeptide: Small ribosomal subunit protein bS20 (81 aa).

The protein belongs to the bacterial ribosomal protein bS20 family.

In terms of biological role, binds directly to 16S ribosomal RNA. The chain is Small ribosomal subunit protein bS20 from Mycoplasma capricolum subsp. capricolum (strain California kid / ATCC 27343 / NCTC 10154).